The following is a 528-amino-acid chain: Inositol-3-phosphate synthase (528 aa).

NAD(+)-binding residues include Gly66, Gly67, Asn68, Asn69, Asp140, Gln187, Arg190, Thr228, Ala229, Asn230, Thr231, Gly279, Asp304, Ser307, Asn338, Asn339, Asp340, Lys353, Gly392, Asp393, Asp421, and Ser422.

It belongs to the myo-inositol 1-phosphate synthase family. Requires NAD(+) as cofactor.

The protein localises to the cytoplasm. The protein resides in the cytosol. It carries out the reaction D-glucose 6-phosphate = 1D-myo-inositol 3-phosphate. It participates in polyol metabolism; myo-inositol biosynthesis; myo-inositol from D-glucose 6-phosphate: step 1/2. With respect to regulation, activated by ammonium ions. Functionally, key enzyme in myo-inositol biosynthesis pathway that catalyzes the conversion of glucose 6-phosphate to 1-myo-inositol 1-phosphate in a NAD-dependent manner. Rate-limiting enzyme in the synthesis of all inositol-containing compounds. De novo-synthesized myo-inositol is essential for incorporation into GPI (glycosylphosphatidylinositol) glycolipids in the bloodstream form. The protein is Inositol-3-phosphate synthase of Trypanosoma brucei brucei.